Consider the following 126-residue polypeptide: Large ribosomal subunit protein bL12 (126 aa).

The protein belongs to the bacterial ribosomal protein bL12 family. Homodimer. Part of the ribosomal stalk of the 50S ribosomal subunit. Forms a multimeric L10(L12)X complex, where L10 forms an elongated spine to which 2 to 4 L12 dimers bind in a sequential fashion. Binds GTP-bound translation factors.

In terms of biological role, forms part of the ribosomal stalk which helps the ribosome interact with GTP-bound translation factors. Is thus essential for accurate translation. The sequence is that of Large ribosomal subunit protein bL12 from Moorella thermoacetica (strain ATCC 39073 / JCM 9320).